A 357-amino-acid chain; its full sequence is Actin, macronuclear (357 aa).

It belongs to the actin family. Post-translationally, met-1 may be removed after translation.

The protein resides in the cytoplasm. It is found in the cytoskeleton. The enzyme catalyses ATP + H2O = ADP + phosphate + H(+). Functionally, actins are highly conserved proteins that are involved in various types of cell motility and are ubiquitously expressed in all eukaryotic cells. The polypeptide is Actin, macronuclear (Oxytricha fallax).